The chain runs to 1262 residues: Tau-tubulin kinase homolog Asator (1262 aa).

The disordered stretch occupies residues 13 to 35 (NASAPDDGNQSCQPSSKQDQYLS). The span at 20–35 (GNQSCQPSSKQDQYLS) shows a compositional bias: polar residues. The region spanning 173 to 436 (WKVVRKIGGG…MLIGLFERCM (264 aa)) is the Protein kinase domain. Residues 179-187 (IGGGGFGEI) and lysine 202 each bind ATP. Residue aspartate 293 is the Proton acceptor of the active site. 3 disordered regions span residues 662–724 (TVTN…TSNA), 755–792 (RSAT…ARSS), and 984–1003 (KDSA…SRHR). Residues 667-679 (KTSEVNRSTEEQK) show a composition bias toward basic and acidic residues. Over residues 755 to 776 (RSATSTNLRPSSSASQRINSGS) the composition is skewed to polar residues.

The protein belongs to the protein kinase superfamily. CK1 Ser/Thr protein kinase family. As to quaternary structure, interacts with Mgtor. Mg(2+) is required as a cofactor. Detected in larval brain.

It is found in the cytoplasm. Its subcellular location is the cytoskeleton. The protein resides in the spindle. It carries out the reaction L-seryl-[protein] + ATP = O-phospho-L-seryl-[protein] + ADP + H(+). The enzyme catalyses L-threonyl-[protein] + ATP = O-phospho-L-threonyl-[protein] + ADP + H(+). Functionally, probable serine/threonine protein kinase. This chain is Tau-tubulin kinase homolog Asator, found in Drosophila melanogaster (Fruit fly).